A 295-amino-acid chain; its full sequence is 4-hydroxybenzoate octaprenyltransferase (295 aa).

A run of 8 helical transmembrane segments spans residues 28–48 (PIGIYLLLWPTLWAVWIAADG), 55–75 (VLIFTCGVILMRSAGCVINDF), 103–123 (WALFAVLVALSFGLVLLTDPF), 147–167 (LPQLVLGAAYSWGIPMAFTAA), 175–195 (AWLIFAANLAWTVAYDTYYAM), 219–239 (AIILALQGLTLGLLLVVGMRL), 241–261 (LGPYFHLGLLVAALCFAWEFV), and 275–295 (FLHNHWAGLAILVGLILDYGI).

It belongs to the UbiA prenyltransferase family. Mg(2+) serves as cofactor.

Its subcellular location is the cell inner membrane. The enzyme catalyses all-trans-octaprenyl diphosphate + 4-hydroxybenzoate = 4-hydroxy-3-(all-trans-octaprenyl)benzoate + diphosphate. It functions in the pathway cofactor biosynthesis; ubiquinone biosynthesis. Functionally, catalyzes the prenylation of para-hydroxybenzoate (PHB) with an all-trans polyprenyl group. Mediates the second step in the final reaction sequence of ubiquinone-8 (UQ-8) biosynthesis, which is the condensation of the polyisoprenoid side chain with PHB, generating the first membrane-bound Q intermediate 3-octaprenyl-4-hydroxybenzoate. This chain is 4-hydroxybenzoate octaprenyltransferase, found in Azotobacter vinelandii (strain DJ / ATCC BAA-1303).